The following is a 204-amino-acid chain: Cytochrome c biogenesis ATP-binding export protein CcmA (204 aa).

An ABC transporter domain is found at 2–204; the sequence is IEVRDLGVSR…LDAEDLGGFL (203 aa). 34 to 41 lines the ATP pocket; it reads GPNGIGKT.

The protein belongs to the ABC transporter superfamily. CcmA exporter (TC 3.A.1.107) family. The complex is composed of two ATP-binding proteins (CcmA) and two transmembrane proteins (CcmB).

Its subcellular location is the cell inner membrane. It carries out the reaction heme b(in) + ATP + H2O = heme b(out) + ADP + phosphate + H(+). Functionally, part of the ABC transporter complex CcmAB involved in the biogenesis of c-type cytochromes; once thought to export heme, this seems not to be the case, but its exact role is uncertain. Responsible for energy coupling to the transport system. This chain is Cytochrome c biogenesis ATP-binding export protein CcmA, found in Ruegeria sp. (strain TM1040) (Silicibacter sp.).